The following is a 98-amino-acid chain: MLEKKTNTEFLVLSTTNTQDKNIKQPLCELVKKSLKYYLSNLNGKDVNNLYELALSELEQPLLDMIMQYTRGNQTRAALMLGINRSTLRKKLKKYSMN.

Residues 74–93 (QTRAALMLGINRSTLRKKLK) constitute a DNA-binding region (H-T-H motif).

Belongs to the transcriptional regulatory Fis family. Homodimer.

Functionally, activates ribosomal RNA transcription. Plays a direct role in upstream activation of rRNA promoters. This is DNA-binding protein Fis from Buchnera aphidicola subsp. Acyrthosiphon pisum (strain 5A).